The sequence spans 290 residues: Phosphatidylglycerol--prolipoprotein diacylglyceryl transferase (290 aa).

Helical transmembrane passes span 21 to 41 (VSLH…MWLA), 60 to 80 (LLYA…VLFY), 96 to 116 (WDGG…MLWF), 124 to 144 (FFQV…AGRL), 199 to 219 (SQLY…NLFI), 226 to 246 (GSVS…VECF), and 259 to 279 (VISM…IMMI). Position 143 (R143) interacts with a 1,2-diacyl-sn-glycero-3-phospho-(1'-sn-glycerol).

It belongs to the Lgt family.

It localises to the cell inner membrane. It carries out the reaction L-cysteinyl-[prolipoprotein] + a 1,2-diacyl-sn-glycero-3-phospho-(1'-sn-glycerol) = an S-1,2-diacyl-sn-glyceryl-L-cysteinyl-[prolipoprotein] + sn-glycerol 1-phosphate + H(+). The protein operates within protein modification; lipoprotein biosynthesis (diacylglyceryl transfer). Catalyzes the transfer of the diacylglyceryl group from phosphatidylglycerol to the sulfhydryl group of the N-terminal cysteine of a prolipoprotein, the first step in the formation of mature lipoproteins. The protein is Phosphatidylglycerol--prolipoprotein diacylglyceryl transferase of Yersinia enterocolitica serotype O:8 / biotype 1B (strain NCTC 13174 / 8081).